Reading from the N-terminus, the 235-residue chain is Small ribosomal subunit protein uS3 (235 aa).

In terms of domain architecture, KH type-2 spans 39–107 (VRSYVKKKLI…PAQVNISEIR (69 aa)).

The protein belongs to the universal ribosomal protein uS3 family. As to quaternary structure, part of the 30S ribosomal subunit. Forms a tight complex with proteins S10 and S14.

Its function is as follows. Binds the lower part of the 30S subunit head. Binds mRNA in the 70S ribosome, positioning it for translation. The polypeptide is Small ribosomal subunit protein uS3 (Buchnera aphidicola subsp. Cinara cedri (strain Cc)).